A 329-amino-acid polypeptide reads, in one-letter code: DNA repair and recombination protein RadA (329 aa).

Position 107–114 (107–114) interacts with ATP; it reads GEFGSGKS.

It belongs to the eukaryotic RecA-like protein family.

Functionally, involved in DNA repair and in homologous recombination. Binds and assemble on single-stranded DNA to form a nucleoprotein filament. Hydrolyzes ATP in a ssDNA-dependent manner and promotes DNA strand exchange between homologous DNA molecules. The sequence is that of DNA repair and recombination protein RadA from Methanocorpusculum labreanum (strain ATCC 43576 / DSM 4855 / Z).